A 281-amino-acid polypeptide reads, in one-letter code: NADPH-dependent 7-cyano-7-deazaguanine reductase (281 aa).

87–89 (VES) contacts substrate. Position 89-90 (89-90 (SK)) interacts with NADPH. The active-site Thioimide intermediate is the Cys188. Asp195 functions as the Proton donor in the catalytic mechanism. 227-228 (HE) contacts substrate. 256-257 (RG) lines the NADPH pocket.

It belongs to the GTP cyclohydrolase I family. QueF type 2 subfamily. In terms of assembly, homodimer.

The protein resides in the cytoplasm. It carries out the reaction 7-aminomethyl-7-carbaguanine + 2 NADP(+) = 7-cyano-7-deazaguanine + 2 NADPH + 3 H(+). The protein operates within tRNA modification; tRNA-queuosine biosynthesis. Catalyzes the NADPH-dependent reduction of 7-cyano-7-deazaguanine (preQ0) to 7-aminomethyl-7-deazaguanine (preQ1). The polypeptide is NADPH-dependent 7-cyano-7-deazaguanine reductase (Aliivibrio fischeri (strain ATCC 700601 / ES114) (Vibrio fischeri)).